Here is a 113-residue protein sequence, read N- to C-terminus: DVVMTQTPLSLPVSLGDQASISCRSSQSLVHSNGNTYLNWYLQKAGQSPKLLIYKVSNRFSGVPDRFSGSGSGTDFTLKISRVEAEDLGIYFCSQTTHVPPTFGGGTKLEIKR.

Residues 1 to 23 are framework-1; it reads DVVMTQTPLSLPVSLGDQASISC. A disulfide bond links Cys23 and Cys93. A complementarity-determining-1 region spans residues 24-39; the sequence is RSSQSLVHSNGNTYLN. Residues 40–54 are framework-2; that stretch reads WYLQKAGQSPKLLIY. The segment at 55-61 is complementarity-determining-2; the sequence is KVSNRFS. The interval 62–93 is framework-3; sequence GVPDRFSGSGSGTDFTLKISRVEAEDLGIYFC. Residues 94–102 form a complementarity-determining-3 region; sequence SQTTHVPPT. The framework-4 stretch occupies residues 103-112; it reads FGGGTKLEIK.

The polypeptide is Ig kappa chain V-II region 26-10 (Mus musculus (Mouse)).